We begin with the raw amino-acid sequence, 468 residues long: Ubiquitin carboxyl-terminal hydrolase MINDY-1 (468 aa).

The segment covering 1–19 (MEQPQTENPAPSKATSAET) has biased composition (polar residues). The interval 1–105 (MEQPQTENPA…RPQELPQSPR (105 aa)) is disordered. Positions 22–41 (SENHEALSGPEKHPQDKDGA) are enriched in basic and acidic residues. The span at 43 to 54 (ADGAAGEQEPGD) shows a compositional bias: low complexity. Pro residues predominate over residues 68–80 (CPPPEASSSPPGP). Phosphoserine is present on Ser-103. The active-site Nucleophile is the Cys-137. His-319 serves as the catalytic Proton acceptor. The interval 388 to 427 (QVDQDYLIALSLQQQQQPQGTLGLSDLELAQQLQQEEYQQ) is ubiquitin-binding domain (UBD). The span at 423–432 (EEYQQQQAVQ) shows a compositional bias: low complexity. The segment at 423–468 (EEYQQQQAVQPVRTRAPSPQGRGATSGRPAGERRQRSKTESDCVLL) is disordered. A Phosphoserine modification is found at Ser-440. Basic and acidic residues predominate over residues 452–468 (AGERRQRSKTESDCVLL).

The protein belongs to the MINDY deubiquitinase family. FAM63 subfamily.

The enzyme catalyses Thiol-dependent hydrolysis of ester, thioester, amide, peptide and isopeptide bonds formed by the C-terminal Gly of ubiquitin (a 76-residue protein attached to proteins as an intracellular targeting signal).. Hydrolase that can specifically remove 'Lys-48'-linked conjugated ubiquitin from proteins. Has exodeubiquitinase activity and has a preference for long polyubiquitin chains. May play a regulatory role at the level of protein turnover. This is Ubiquitin carboxyl-terminal hydrolase MINDY-1 (Mindy1) from Mus musculus (Mouse).